The following is an 81-amino-acid chain: Apolipoprotein C-I, acidic form (81 aa).

An N-terminal signal peptide occupies residues 1–24 (MRLFLSLLVVVLSMVLKGPTPAQG).

The protein belongs to the apolipoprotein C1 family.

It localises to the secreted. The protein is Apolipoprotein C-I, acidic form (APOC1A) of Macaca fascicularis (Crab-eating macaque).